A 699-amino-acid polypeptide reads, in one-letter code: Polyribonucleotide nucleotidyltransferase (699 aa).

Mg(2+) is bound by residues D487 and D493. In terms of domain architecture, KH spans 554–613 (PRMLNMKINPEKIRDVIGKGGAVIRALQEETGTVIEIEDDGSITISSVSAEGAQKAKARI). Residues 623–691 (GKVYEGTVVR…ERGKIRLSMK (69 aa)) enclose the S1 motif domain.

The protein belongs to the polyribonucleotide nucleotidyltransferase family. Requires Mg(2+) as cofactor.

It localises to the cytoplasm. The catalysed reaction is RNA(n+1) + phosphate = RNA(n) + a ribonucleoside 5'-diphosphate. Involved in mRNA degradation. Catalyzes the phosphorolysis of single-stranded polyribonucleotides processively in the 3'- to 5'-direction. This Azoarcus sp. (strain BH72) protein is Polyribonucleotide nucleotidyltransferase.